The chain runs to 542 residues: Sterile alpha motif domain-containing protein 11 (542 aa).

A disordered region spans residues 268 to 364 (LLALPPQGPP…GRGLLSGSTL (97 aa)). Residues 273 to 285 (PQGPPGPGPPIPP) are compositionally biased toward pro residues. Threonine 342 carries the phosphothreonine modification. The SAM domain maps to 404 to 469 (WTVDDVCNFV…AQVAKRLGRV (66 aa)). The interval 486–542 (LQAPELSPGHQPLSPATTTSPYEGTHLPTGQASPKQENGSGTIALLSGAPDPSQLLQ) is disordered. The residue at position 499 (serine 499) is a Phosphoserine. Residues 499–526 (SPATTTSPYEGTHLPTGQASPKQENGSG) show a composition bias toward polar residues.

As to quaternary structure, self-associates. Component of a Polycomb group (PcG) multiprotein PRC1-like complex. Interacts with SAMD7 and PHC2. As to expression, expressed in the outer nuclear layer of rod photoreceptors in the retina (at protein level). Predominantly expressed in retinal photoreceptors and pineal gland.

The protein resides in the nucleus. Component of a Polycomb group (PcG) multiprotein PRC1-like complex, essential for establishing rod photoreceptor cell identity and function by silencing nonrod gene expression in developing rod photoreceptor cells. This is Sterile alpha motif domain-containing protein 11 (Samd11) from Mus musculus (Mouse).